Consider the following 301-residue polypeptide: Bifunctional protein FolD (301 aa).

NADP(+) is bound by residues 164–166, Ser191, and Ile232; that span reads GRS.

The protein belongs to the tetrahydrofolate dehydrogenase/cyclohydrolase family. Homodimer.

It catalyses the reaction (6R)-5,10-methylene-5,6,7,8-tetrahydrofolate + NADP(+) = (6R)-5,10-methenyltetrahydrofolate + NADPH. The catalysed reaction is (6R)-5,10-methenyltetrahydrofolate + H2O = (6R)-10-formyltetrahydrofolate + H(+). It participates in one-carbon metabolism; tetrahydrofolate interconversion. Its function is as follows. Catalyzes the oxidation of 5,10-methylenetetrahydrofolate to 5,10-methenyltetrahydrofolate and then the hydrolysis of 5,10-methenyltetrahydrofolate to 10-formyltetrahydrofolate. This Borreliella afzelii (strain PKo) (Borrelia afzelii) protein is Bifunctional protein FolD.